A 94-amino-acid polypeptide reads, in one-letter code: Large ribosomal subunit protein bL25 (94 aa).

Belongs to the bacterial ribosomal protein bL25 family. Part of the 50S ribosomal subunit; part of the 5S rRNA/L5/L18/L25 subcomplex. Contacts the 5S rRNA. Binds to the 5S rRNA independently of L5 and L18.

In terms of biological role, this is one of the proteins that binds to the 5S RNA in the ribosome where it forms part of the central protuberance. This chain is Large ribosomal subunit protein bL25, found in Citrobacter koseri (strain ATCC BAA-895 / CDC 4225-83 / SGSC4696).